A 340-amino-acid polypeptide reads, in one-letter code: L-threonine 3-dehydrogenase (340 aa).

Position 38 (C38) interacts with Zn(2+). Catalysis depends on charge relay system residues T40 and H43. Positions 63, 64, 93, 96, 99, and 107 each coordinate Zn(2+). Residues I175, D195, R200, 261–263 (LGI), and 285–286 (IY) contribute to the NAD(+) site.

The protein belongs to the zinc-containing alcohol dehydrogenase family. In terms of assembly, homotetramer. It depends on Zn(2+) as a cofactor.

It is found in the cytoplasm. The enzyme catalyses L-threonine + NAD(+) = (2S)-2-amino-3-oxobutanoate + NADH + H(+). It functions in the pathway amino-acid degradation; L-threonine degradation via oxydo-reductase pathway; glycine from L-threonine: step 1/2. In terms of biological role, catalyzes the NAD(+)-dependent oxidation of L-threonine to 2-amino-3-ketobutyrate. The sequence is that of L-threonine 3-dehydrogenase from Xanthomonas oryzae pv. oryzae (strain MAFF 311018).